Consider the following 153-residue polypeptide: SsrA-binding protein (153 aa).

Positions 132 to 142 (ALKRKEAEREA) are enriched in basic and acidic residues. The tract at residues 132-153 (ALKRKEAEREAQSAMKRYAKGY) is disordered.

This sequence belongs to the SmpB family.

Its subcellular location is the cytoplasm. Its function is as follows. Required for rescue of stalled ribosomes mediated by trans-translation. Binds to transfer-messenger RNA (tmRNA), required for stable association of tmRNA with ribosomes. tmRNA and SmpB together mimic tRNA shape, replacing the anticodon stem-loop with SmpB. tmRNA is encoded by the ssrA gene; the 2 termini fold to resemble tRNA(Ala) and it encodes a 'tag peptide', a short internal open reading frame. During trans-translation Ala-aminoacylated tmRNA acts like a tRNA, entering the A-site of stalled ribosomes, displacing the stalled mRNA. The ribosome then switches to translate the ORF on the tmRNA; the nascent peptide is terminated with the 'tag peptide' encoded by the tmRNA and targeted for degradation. The ribosome is freed to recommence translation, which seems to be the essential function of trans-translation. The protein is SsrA-binding protein of Campylobacter hominis (strain ATCC BAA-381 / DSM 21671 / CCUG 45161 / LMG 19568 / NCTC 13146 / CH001A).